A 380-amino-acid chain; its full sequence is Cytoplasmic protein NCK2 (380 aa).

At Thr2 the chain carries N-acetylthreonine. In terms of domain architecture, SH3 1 spans 2–61 (TEEVIVIAKWDYTAQQDQELDIKKNERLWLLDDSKTWWRVRNAANRTGYVPSNYVERKNS). Positions 79–102 (KTRRKTSARDASPTPSTDAEYPAN) are disordered. A Phosphoserine modification is found at Ser90. The residue at position 92 (Thr92) is a Phosphothreonine. Residue Ser94 is modified to Phosphoserine. Residue Tyr110 is modified to Phosphotyrosine. 2 consecutive SH3 domains span residues 111 to 170 (DLNI…EEVD) and 195 to 257 (RVLH…VLSD). One can recognise an SH2 domain in the interval 285 to 380 (WYYGNVTRHQ…EKLYLVRALQ (96 aa)).

As to quaternary structure, interacts with DOCK1, LIMS1 and TGFB1I1. Part of a complex containing PPP1R15B, PP1 and NCK2. Interacts with FASLG. Interacts with AXL. Interacts with PAK1, PKN2 and SOS1. Interacts (via SH2 domain) with EGFR. Interacts (via SH2 domain) with DDR1. Interacts with IRS1. Post-translationally, phosphorylated. As to expression, ubiquitous.

It is found in the cytoplasm. The protein localises to the endoplasmic reticulum. Its function is as follows. Adapter protein which associates with tyrosine-phosphorylated growth factor receptors or their cellular substrates. Maintains low levels of EIF2S1 phosphorylation by promoting its dephosphorylation by PP1. Plays a role in ELK1-dependent transcriptional activation in response to activated Ras signaling. This chain is Cytoplasmic protein NCK2 (NCK2), found in Homo sapiens (Human).